The primary structure comprises 273 residues: tRNA (guanine-N(7)-)-methyltransferase (273 aa).

A compositionally biased stretch (polar residues) spans 1–31; that stretch reads MSQHPDINTNVDATSLTDDQKSLDTNATSGN. Residues 1 to 36 form a disordered region; sequence MSQHPDINTNVDATSLTDDQKSLDTNATSGNEVAPD. S-adenosyl-L-methionine contacts are provided by Glu105, Glu130, Asp157, and Asp179. Residue Asp179 is part of the active site. Residues Lys183, Asp215, and 252–255 contribute to the substrate site; that span reads TKFE.

It belongs to the class I-like SAM-binding methyltransferase superfamily. TrmB family.

The enzyme catalyses guanosine(46) in tRNA + S-adenosyl-L-methionine = N(7)-methylguanosine(46) in tRNA + S-adenosyl-L-homocysteine. Its pathway is tRNA modification; N(7)-methylguanine-tRNA biosynthesis. In terms of biological role, catalyzes the formation of N(7)-methylguanine at position 46 (m7G46) in tRNA. The polypeptide is tRNA (guanine-N(7)-)-methyltransferase (Psychrobacter cryohalolentis (strain ATCC BAA-1226 / DSM 17306 / VKM B-2378 / K5)).